A 357-amino-acid chain; its full sequence is Arginine kinase (357 aa).

Alanine 2 is subject to N-acetylalanine. In terms of domain architecture, Phosphagen kinase N-terminal spans 9 to 91; it reads KLDEGFKKLE…FDPIIEDYHK (83 aa). 64 to 68 serves as a coordination point for L-arginine; it reads GVGVY. The Phosphagen kinase C-terminal domain occupies 119 to 356; that stretch reads FVISTRVRCG…LELIKIEKEM (238 aa). Residues 122-126 and histidine 185 each bind ATP; that span reads STRVR. Glutamate 225 is a binding site for L-arginine. An ATP-binding site is contributed by arginine 229. Cysteine 271 lines the L-arginine pocket. ATP is bound by residues 280–284 and 309–314; these read RASVH and RGTRGE. Glutamate 314 is an L-arginine binding site.

It belongs to the ATP:guanido phosphotransferase family.

It carries out the reaction L-arginine + ATP = N(omega)-phospho-L-arginine + ADP + H(+). This chain is Arginine kinase, found in Eriocheir sinensis (Chinese mitten crab).